The sequence spans 137 residues: Acetyltransferase Atu2258 (137 aa).

Residues 1 to 137 (MNFVLSDVAD…QSITWLEKRF (137 aa)) form the N-acetyltransferase domain. CoA-binding positions include 66–68 (LFV), Gly-74, and 108–110 (RTY).

Catalyzes the transfer of an acetyl group from acetyl coenzyme A (AcCoA) to an acceptor substrate and releases both CoA and the acetylated product. It prefers glucosamine 6-phosphate or dopamine. It can also use the thialysine, N(8)-acetylspermidine, chloramphenicol, puromycin, polymyxin B, and 4-aminobutyrate ethyl ester. The sequence is that of Acetyltransferase Atu2258 from Agrobacterium fabrum (strain C58 / ATCC 33970) (Agrobacterium tumefaciens (strain C58)).